A 975-amino-acid polypeptide reads, in one-letter code: Homeobox protein cut-like 1 (975 aa).

Positions 1-73 (SRQVKEQLIK…ILALRSIQGR (73 aa)) form a DNA-binding region, CUT 1. Disordered regions lie at residues 90–113 (PKRRNGSEGNITTRIRASETGSDE) and 126–148 (LQVQKTAEPAQPSSTSSSGTSDD). Residues 113–169 (EAIKSILEQAKRELQVQKTAEPAQPSSTSSSGTSDDAIRSILQQARREMEAQQAALD) adopt a coiled-coil conformation. S207 carries the post-translational modification Phosphoserine. Positions 209–246 (KKPPTAPDTSASTLPNPPALKKESQDAPGLDLPGAAES) are disordered. Glycyl lysine isopeptide (Lys-Gly) (interchain with G-Cter in SUMO2) cross-links involve residues K229, K255, and K286. Positions 262-297 (GVWKDHWWSTVQPERKSAAPPEDAKSEEAGGTKEKG) are enriched in basic and acidic residues. A disordered region spans residues 262 to 369 (GVWKDHWWST…SKPAKPSVPP (108 aa)). Over residues 328–351 (RTPQSSELSLTGASRSETPQNSPL) the composition is skewed to polar residues. S349 bears the Phosphoserine mark. The CUT 2 DNA-binding region spans 374–461 (QYEIYMYQEV…QGVLPVQGQQ (88 aa)). Polar residues predominate over residues 476–489 (LQQGCVSSESTPKT). The tract at residues 476–549 (LQQGCVSSES…SQPATPLPLS (74 aa)) is disordered. The span at 490-506 (SASCSPAPESPMSSSES) shows a compositional bias: low complexity. 2 positions are modified to phosphoserine: S499 and S509. A DNA-binding region (CUT 3) is located at residues 557 to 644 (QELVAMSPEL…VEKLMDMKRM (88 aa)). The interval 652–687 (RRHSSVSDSQPCEPPSVGIDYSQGASPQPQHQLKKP) is disordered. Residues 684-743 (LKKPRVVLAPEEKEALKRAYQQKPYPSPKTIEELATQLNLKTSTVINWFHNYRSRIRREL) constitute a DNA-binding region (homeobox). A Phosphoserine modification is found at S710. Residue K724 forms a Glycyl lysine isopeptide (Lys-Gly) (interchain with G-Cter in SUMO2) linkage. A disordered region spans residues 752-949 (SQGQAGARHS…DSRDNPLRKK (198 aa)). Positions 756-773 (AGARHSPSARSSGAAPSS) are enriched in low complexity. At S777 the chain carries Phosphoserine. Over residues 780–813 (GVEAAEGPGAADAEESAPAAAAKSQGGPAEAAVA) the composition is skewed to low complexity. Gly residues predominate over residues 838-847 (PGRRGGGGPA). Over residues 850-860 (APAAPAAAARG) the composition is skewed to low complexity. A compositionally biased stretch (basic residues) spans 861–890 (PSRRPGARAKPRRRRRRRRRHARGGGRRYL). Positions 907-929 (RSSALPSTSAPAAARRPSSLQSL) are enriched in low complexity. A Phosphoserine modification is found at S925. Residues 937 to 946 (GARDSRDNPL) show a composition bias toward basic and acidic residues. Phosphoserine is present on residues S956 and S966.

The protein belongs to the CUT homeobox family. Interacts with BANP. In terms of processing, as cells progress into S phase, a fraction of CUX1 molecules is proteolytically processed into N-terminally truncated proteins of 110 kDa by CTSL. Cell cycle-dependent processing of CUX1 serves to generate a CDP/Cux p110 with distinct DNA binding and transcriptional properties. Phosphorylated by PKA. A broad pattern of expression observed in tissues of diverse origins, such as cartilage, liver, brain, lung, heart and skeletal muscle. There are 2 distinct protein species: the larger one (230-250 kDa) is found mainly in adult brain, lung and heart, and the smaller one (180-190 kDa) predominates in early embryonic tissues.

Its subcellular location is the nucleus. Functionally, transcription factor involved in the control of neuronal differentiation in the brain. Regulates dendrite development and branching, and dendritic spine formation in cortical layers II-III. Also involved in the control of synaptogenesis. In addition, it has probably a broad role in mammalian development as a repressor of developmentally regulated gene expression. May act by preventing binding of positively-activing CCAAT factors to promoters. Component of nf-munr repressor; binds to the matrix attachment regions (MARs) (5' and 3') of the immunoglobulin heavy chain enhancer. Represses T-cell receptor (TCR) beta enhancer function by binding to MARbeta, an ATC-rich DNA sequence located upstream of the TCR beta enhancer. Binds to the TH enhancer; may require the basic helix-loop-helix protein TCF4 as a coactivator. In terms of biological role, plays a role in cell cycle progression, in particular at the G1/S transition. As cells progress into S phase, a fraction of CUX1 molecules is proteolytically processed into N-terminally truncated proteins of 110 kDa. While CUX1 only transiently binds to DNA and carries the CCAAT-displacement activity, CDP/Cux p110 makes a stable interaction with DNA and stimulates expression of genes such as POLA1. The polypeptide is Homeobox protein cut-like 1 (CUX1) (Canis lupus familiaris (Dog)).